Consider the following 555-residue polypeptide: Urocanate hydratase (555 aa).

NAD(+) is bound by residues 51–52, Gln129, 175–177, Glu195, 262–266, 272–273, and Tyr321; these read GG, GMG, QTSAH, and YL. The active site involves Cys409. Gly491 provides a ligand contact to NAD(+).

The protein belongs to the urocanase family. NAD(+) is required as a cofactor.

The protein localises to the cytoplasm. It carries out the reaction 4-imidazolone-5-propanoate = trans-urocanate + H2O. It functions in the pathway amino-acid degradation; L-histidine degradation into L-glutamate; N-formimidoyl-L-glutamate from L-histidine: step 2/3. In terms of biological role, catalyzes the conversion of urocanate to 4-imidazolone-5-propionate. In Xanthomonas euvesicatoria pv. vesicatoria (strain 85-10) (Xanthomonas campestris pv. vesicatoria), this protein is Urocanate hydratase.